The chain runs to 272 residues: MLNLNELKSGFHYFVMGWHFITQKGLRRFVIMPIVLNTILLCGLFWLFISQISSAIDWMMNFIPDWLSFLSVILLTLSILTILLLFYFTFTTFSGFIAAPFNGLLAEKVEKMLTGENINDDGLVDIMRDVPRMLAREWQKLRYSLPKIIALFLLSFIPLVGQTIVPVLTFLFTCWMMAIQYCDYPFDNHKVSFDIMKNALGNQRTQSLTFGGLVTCCTFVPVINLLIMPVAVCGATLMWVENYRNDLGFNMNRSFSSQTGLDVRSENTGIVK.

The next 4 helical transmembrane spans lie at 29-49 (FVIMPIVLNTILLCGLFWLFI), 66-86 (WLSFLSVILLTLSILTILLLF), 148-168 (IIALFLLSFIPLVGQTIVPVL), and 219-239 (FVPVINLLIMPVAVCGATLMW).

Belongs to the CysZ family.

It is found in the cell inner membrane. High affinity, high specificity proton-dependent sulfate transporter, which mediates sulfate uptake. Provides the sulfur source for the cysteine synthesis pathway. The protein is Sulfate transporter CysZ of Haemophilus influenzae (strain PittGG).